The primary structure comprises 380 residues: Cytochrome b (380 aa).

The next 4 membrane-spanning stretches (helical) occupy residues 34–54 (FGSL…FLAM), 78–99 (WLLR…YFHI), 114–134 (WNIG…GYVL), and 179–199 (FFTF…IHLL). Heme b is bound by residues His-84 and His-98. Residue His-197 coordinates heme b. His-202 lines the a ubiquinone pocket. Transmembrane regions (helical) follow at residues 227-247 (FKDL…STFA), 289-309 (LGGV…PITH), 321-341 (TAKA…WIGG), and 348-368 (FISI…LIIP).

Belongs to the cytochrome b family. As to quaternary structure, the cytochrome bc1 complex contains 3 respiratory subunits (MT-CYB, CYC1 and UQCRFS1), 2 core proteins (UQCRC1 and UQCRC2) and probably 6 low-molecular weight proteins. The cofactor is heme b.

The protein resides in the mitochondrion inner membrane. In terms of biological role, component of the ubiquinol-cytochrome c reductase complex (complex III or cytochrome b-c1 complex) that is part of the mitochondrial respiratory chain. The b-c1 complex mediates electron transfer from ubiquinol to cytochrome c. Contributes to the generation of a proton gradient across the mitochondrial membrane that is then used for ATP synthesis. The polypeptide is Cytochrome b (mt-cyb) (Glandirana rugosa (Japanese wrinkled frog)).